The primary structure comprises 77 residues: Acyl carrier protein (77 aa).

The Carrier domain maps to 1–76 (MAVFEDVRDV…DVVNYIEKLG (76 aa)). At Ser-36 the chain carries O-(pantetheine 4'-phosphoryl)serine.

Belongs to the acyl carrier protein (ACP) family. In terms of processing, 4'-phosphopantetheine is transferred from CoA to a specific serine of apo-ACP by AcpS. This modification is essential for activity because fatty acids are bound in thioester linkage to the sulfhydryl of the prosthetic group.

The protein resides in the cytoplasm. It functions in the pathway lipid metabolism; fatty acid biosynthesis. Its function is as follows. Carrier of the growing fatty acid chain in fatty acid biosynthesis. This Campylobacter concisus (strain 13826) protein is Acyl carrier protein.